We begin with the raw amino-acid sequence, 416 residues long: Calreticulin (416 aa).

An N-terminal signal peptide occupies residues Met1–Ala17. Residues Asp18–Glu197 are N-domain. Position 26 (Gln26) interacts with Ca(2+). The residue at position 48 (Lys48) is an N6-acetyllysine. Lys62 and Lys64 together coordinate Ca(2+). Lys64 carries the N6-(2-hydroxyisobutyryl)lysine modification. A disulfide bond links Cys105 and Cys137. An alpha-D-glucoside-binding residues include Tyr109, Lys111, Tyr128, and Asp135. N6-acetyllysine is present on Lys159. A 1-1 repeat occupies Val191–Phe202. Positions Val191–Glu255 are 4 X approximate repeats. The disordered stretch occupies residues Ser193–Pro277. A P-domain region spans residues Asp198–Tyr308. Residues Lys207–Glu251 are compositionally biased toward basic and acidic residues. Lys209 is subject to N6-acetyllysine. 6 repeat units span residues Asp210–Glu221, Asp227–Lys238, Asp244–Glu255, Gly259–Pro269, Gly273–Pro283, and Gly287–Pro297. Residues Asp237–Glu270 form an interaction with PPIB region. A compositionally biased stretch (acidic residues) spans Asp252–Trp261. The interval Gly259–Pro297 is 3 X approximate repeats. Positions Asp309–Leu416 are C-domain. An alpha-D-glucoside is bound at residue Asp317. Residue Asp328 participates in Ca(2+) binding. The disordered stretch occupies residues Thr350–Leu416. The span at Ala352–Glu379 shows a compositional bias: basic and acidic residues. Over residues Glu380–Ala408 the composition is skewed to acidic residues. A Prevents secretion from ER motif is present at residues Lys413–Leu416.

It belongs to the calreticulin family. In terms of assembly, monomer. Component of an EIF2 complex at least composed of CELF1/CUGBP1, CALR, CALR3, EIF2S1, EIF2S2, HSP90B1 and HSPA5. Interacts with GABARAP, NR3C1 and TRIM21. Interacts with PPIB and SPACA9. Interacts (via P-domain) with PDIA5. Interacts with PDIA3/ERp57. Interacts with CLCC1. Predentin and odontoblast.

It is found in the endoplasmic reticulum lumen. Its subcellular location is the cytoplasm. It localises to the cytosol. The protein resides in the secreted. The protein localises to the extracellular space. It is found in the extracellular matrix. Its subcellular location is the cell surface. It localises to the sarcoplasmic reticulum lumen. The protein resides in the cytoplasmic vesicle. The protein localises to the secretory vesicle. It is found in the cortical granule. Its subcellular location is the cytolytic granule. Functionally, calcium-binding chaperone that promotes folding, oligomeric assembly and quality control in the endoplasmic reticulum (ER) via the calreticulin/calnexin cycle. This lectin interacts transiently with almost all of the monoglucosylated glycoproteins that are synthesized in the ER. Interacts with the DNA-binding domain of NR3C1 and mediates its nuclear export. Involved in maternal gene expression regulation. May participate in oocyte maturation via the regulation of calcium homeostasis. Present in the cortical granules of non-activated oocytes, is exocytosed during the cortical reaction in response to oocyte activation and might participate in the block to polyspermy. This chain is Calreticulin (Calr), found in Rattus norvegicus (Rat).